Consider the following 361-residue polypeptide: Membrane-bound lytic murein transglycosylase B (361 aa).

A signal peptide spans 1–18 (MFKRRYVTLLPLFVLLAA). Cys19 carries the N-palmitoyl cysteine lipid modification. A lipid anchor (S-diacylglycerol cysteine) is attached at Cys19. Glu162 is a catalytic residue.

In terms of assembly, monomer.

Its subcellular location is the cell outer membrane. It catalyses the reaction Exolytic cleavage of the (1-&gt;4)-beta-glycosidic linkage between N-acetylmuramic acid (MurNAc) and N-acetylglucosamine (GlcNAc) residues in peptidoglycan, from either the reducing or the non-reducing ends of the peptidoglycan chains, with concomitant formation of a 1,6-anhydrobond in the MurNAc residue.. Its function is as follows. Murein-degrading enzyme. Catalyzes the cleavage of the glycosidic bonds between N-acetylmuramic acid and N-acetylglucosamine residues in peptidoglycan. May play a role in recycling of muropeptides during cell elongation and/or cell division. This Escherichia coli (strain K12) protein is Membrane-bound lytic murein transglycosylase B (mltB).